We begin with the raw amino-acid sequence, 338 residues long: D-alanine--D-alanine ligase (338 aa).

An ATP-grasp domain is found at 120–324 (KRVMLAEGLP…YEDLCIEVLK (205 aa)). 150–205 (PDKLGLPLIVKPAREGSSIGLTKVTERAGMADAVAQAEKLDADILCEQFISGDEVT) is a binding site for ATP. Mg(2+) is bound by residues Asp277, Glu291, and Asn293.

It belongs to the D-alanine--D-alanine ligase family. Mg(2+) serves as cofactor. The cofactor is Mn(2+).

Its subcellular location is the cytoplasm. The catalysed reaction is 2 D-alanine + ATP = D-alanyl-D-alanine + ADP + phosphate + H(+). It participates in cell wall biogenesis; peptidoglycan biosynthesis. Its function is as follows. Cell wall formation. This Polaromonas sp. (strain JS666 / ATCC BAA-500) protein is D-alanine--D-alanine ligase.